A 409-amino-acid polypeptide reads, in one-letter code: Arginine deiminase (409 aa).

Residue cysteine 399 is the Amidino-cysteine intermediate of the active site.

This sequence belongs to the arginine deiminase family.

It localises to the cytoplasm. The catalysed reaction is L-arginine + H2O = L-citrulline + NH4(+). It participates in amino-acid degradation; L-arginine degradation via ADI pathway; carbamoyl phosphate from L-arginine: step 1/2. The chain is Arginine deiminase from Streptococcus sanguinis (strain SK36).